The chain runs to 506 residues: uncharacterized protein (506 aa).

Disordered regions lie at residues Pro-104–Ser-144 and Gln-397–Pro-456. The segment covering Glu-130 to Ser-144 has biased composition (low complexity). Residues Ile-405–Glu-443 show a composition bias toward basic and acidic residues. A coiled-coil region spans residues Ile-405–Leu-455.

This is an uncharacterized protein from Dictyostelium discoideum (Social amoeba).